A 508-amino-acid chain; its full sequence is Probable polyol transporter 3 (508 aa).

12 helical membrane passes run 21-41 (FAFG…YDTG), 60-80 (QIEV…LTAG), 90-110 (YTIA…GYGP), 120-140 (CIAG…SAEI), 147-167 (GFLT…GYVS), 178-198 (LGWR…AFGI), 280-300 (ILIA…EAVV), 318-338 (LLLA…IATF), 348-368 (LLLT…VSLT), 384-404 (IVST…ITWV), 418-438 (GASI…MSFL), and 448-468 (GVFF…FFML).

This sequence belongs to the major facilitator superfamily. Sugar transporter (TC 2.A.1.1) family.

It localises to the membrane. Plasma membrane sugar-proton symporter. This chain is Probable polyol transporter 3 (PLT3), found in Arabidopsis thaliana (Mouse-ear cress).